The sequence spans 87 residues: Mitotic-spindle organizing protein 1 (87 aa).

It belongs to the MOZART1 family. In terms of assembly, part of the gamma-tubulin complex.

It is found in the cytoplasm. The protein localises to the cytoskeleton. It localises to the microtubule organizing center. The protein resides in the spindle pole body. Functionally, required for gamma-tubulin complex recruitment to the microtubule organizing center (MTOC). This is Mitotic-spindle organizing protein 1 from Chaetomium globosum (strain ATCC 6205 / CBS 148.51 / DSM 1962 / NBRC 6347 / NRRL 1970) (Soil fungus).